The following is a 213-amino-acid chain: Ripening-related protein 3 (213 aa).

The first 32 residues, 1–32 (MAGAMTMSRRRLSHALLLVLAILPNLAALAVA), serve as a signal peptide directing secretion.

This sequence belongs to the kiwellin family.

It is found in the secreted. This is Ripening-related protein 3 from Oryza sativa subsp. japonica (Rice).